The chain runs to 122 residues: Fluoride-specific ion channel FluC 2 (122 aa).

Transmembrane regions (helical) follow at residues 1–21 (MAWLYVGCGGIAGTLARFLLS), 33–53 (PLGTLFVNLSGAFLLGLLLAL), 62–82 (VTLALGTGFVGAYTTFSTFTY), and 102–122 (GSILGGLLLAWLGWLAAGSLF). Na(+) is bound by residues Gly72 and Thr75.

This sequence belongs to the fluoride channel Fluc/FEX (TC 1.A.43) family.

It localises to the cell membrane. It catalyses the reaction fluoride(in) = fluoride(out). With respect to regulation, na(+) is not transported, but it plays an essential structural role and its presence is essential for fluoride channel function. Its function is as follows. Fluoride-specific ion channel. Important for reducing fluoride concentration in the cell, thus reducing its toxicity. The polypeptide is Fluoride-specific ion channel FluC 2 (Moorella thermoacetica (strain ATCC 39073 / JCM 9320)).